Reading from the N-terminus, the 145-residue chain is Toxin Res (145 aa).

This sequence belongs to the MbcT/ParT/Res family. As to quaternary structure, homodimer. Forms a complex with cognate antitoxin Xre; the 2 toxin molecules dimerize and each contacts an Xre homodimer. Most Res-Xre contacts are between the antitoxin molecule closest to the toxin.

Toxic component of a type II toxin-antitoxin (TA) system. Expression in E.coli inhibits cell growth. In vivo it is probably neutralized by cognate antitoxin Xre; this has not been shown upon expression in E.coli. Probably depletes intracellular NAD(+). In Pseudomonas putida (strain ATCC 47054 / DSM 6125 / CFBP 8728 / NCIMB 11950 / KT2440), this protein is Toxin Res.